Reading from the N-terminus, the 226-residue chain is Lipoprotein-releasing system ATP-binding protein LolD (226 aa).

The ABC transporter domain maps to 6–226; sequence LSVEQVSKSF…QLQQGSLIRI (221 aa). Residue 42–49 participates in ATP binding; that stretch reads GESGCGKS.

Belongs to the ABC transporter superfamily. Lipoprotein translocase (TC 3.A.1.125) family. In terms of assembly, the complex is composed of two ATP-binding proteins (LolD) and two transmembrane proteins (LolC and LolE).

Its subcellular location is the cell inner membrane. Its function is as follows. Part of the ABC transporter complex LolCDE involved in the translocation of mature outer membrane-directed lipoproteins, from the inner membrane to the periplasmic chaperone, LolA. Responsible for the formation of the LolA-lipoprotein complex in an ATP-dependent manner. This chain is Lipoprotein-releasing system ATP-binding protein LolD, found in Treponema pallidum (strain Nichols).